Here is a 339-residue protein sequence, read N- to C-terminus: Putative zinc metalloprotease FN1322 (339 aa).

Position 17 (H17) interacts with Zn(2+). The active site involves E18. Position 21 (H21) interacts with Zn(2+). Helical transmembrane passes span 88–110 (FIVL…FVTA), 262–284 (FGWI…LNLL), and 318–335 (GMIL…NDVW). The region spanning 96 to 179 (FMNFLMAFIL…ITALVERNGK (84 aa)) is the PDZ domain.

The protein belongs to the peptidase M50B family. Zn(2+) is required as a cofactor.

The protein resides in the cell membrane. The chain is Putative zinc metalloprotease FN1322 from Fusobacterium nucleatum subsp. nucleatum (strain ATCC 25586 / DSM 15643 / BCRC 10681 / CIP 101130 / JCM 8532 / KCTC 2640 / LMG 13131 / VPI 4355).